Here is a 146-residue protein sequence, read N- to C-terminus: Catabolic 3-dehydroquinase (146 aa).

Catalysis depends on Y24, which acts as the Proton acceptor. Substrate-binding residues include N78, H84, and D91. The active-site Proton donor is the H104. Substrate-binding positions include 105–106 (IT) and R115.

The protein belongs to the type-II 3-dehydroquinase family. In terms of assembly, homododecamer. Adopts a ring-like structure, composed of an arrangement of two hexameric rings stacked on top of one another.

The enzyme catalyses 3-dehydroquinate = 3-dehydroshikimate + H2O. Its pathway is aromatic compound metabolism; 3,4-dihydroxybenzoate biosynthesis; 3,4-dihydroxybenzoate from 3-dehydroquinate: step 1/2. Its function is as follows. Is involved in the catabolism of quinate. Allows the utilization of quinate as carbon source via the beta-ketoadipate pathway. This Candida albicans (strain SC5314 / ATCC MYA-2876) (Yeast) protein is Catabolic 3-dehydroquinase.